The primary structure comprises 373 residues: P2Y purinoceptor 2 (373 aa).

At 1 to 32 the chain is on the extracellular side; the sequence is MAADLEPWNSTINGTWEGDELGYKCRFNEDFK. Residues Asn-9 and Asn-13 are each glycosylated (N-linked (GlcNAc...) asparagine). The chain crosses the membrane as a helical span at residues 33-59; the sequence is YVLLPVSYGVVCVLGLCLNVVALYIFL. The Cytoplasmic segment spans residues 60 to 70; it reads CRLKTWNASTT. Residues 71-93 form a helical membrane-spanning segment; it reads YMFHLAVSDSLYAASLPLLVYYY. Residues 94–110 are Extracellular-facing; it reads ARGDHWPFSTVLCKLVR. The cysteines at positions 106 and 183 are disulfide-linked. The helical transmembrane segment at 111-129 threads the bilayer; sequence FLFYTNLYCSILFLTCISV. Topologically, residues 130–152 are cytoplasmic; it reads HRCLGVLRPLHSLRWGRARYARR. The chain crosses the membrane as a helical span at residues 153–172; it reads VAAVVWVLVLACQAPVLYFV. The Extracellular portion of the chain corresponds to 173–194; sequence TTSVRGTRITCHDTSARELFSH. Residues 195-220 traverse the membrane as a helical segment; sequence FVAYSSVMLGLLFAVPFSVILVCYVL. The Cytoplasmic segment spans residues 221–246; that stretch reads MARRLLKPAYGTTGGLPRAKRKSVRT. Residues 247 to 269 form a helical membrane-spanning segment; it reads IALVLAVFALCFLPFHVTRTLYY. Residues 270 to 287 are Extracellular-facing; it reads SFRSLDLSCHTLNAINMA. Residues 288–309 form a helical membrane-spanning segment; the sequence is YKITRPLASANSCLDPVLYFLA. Topologically, residues 310 to 373 are cytoplasmic; sequence GQRLVRFARD…AGSETKDIRL (64 aa). Positions 318–373 are disordered; it reads RDAKPPTEPTPSPQARRKLGLHRPNRTVRKDLSVSSDDSRRTESTPAGSETKDIRL. The span at 332–344 shows a compositional bias: basic residues; the sequence is ARRKLGLHRPNRT. The segment covering 345–360 has biased composition (basic and acidic residues); that stretch reads VRKDLSVSSDDSRRTE.

It belongs to the G-protein coupled receptor 1 family. In terms of tissue distribution, spleen, testis, kidney, liver, lung, heart and brain.

The protein localises to the cell membrane. In terms of biological role, receptor for ATP and UTP coupled to G-proteins that activate a phosphatidylinositol-calcium second messenger system. The affinity range is UTP = ATP &gt; ATP-gamma-S &gt;&gt; 2-methylthio-ATP = ADP. The polypeptide is P2Y purinoceptor 2 (P2ry2) (Mus musculus (Mouse)).